We begin with the raw amino-acid sequence, 65 residues long: Lantibiotic lacticin 3147 A2 (65 aa).

A propeptide spanning residues 1–36 is cleaved from the precursor; it reads MKEKNMKKNDTIELQLGKYLEDDMIELAEGDESHGG. Thr37 is modified (2-oxobutanoic acid). Thr38 and Thr41 each carry 2,3-didehydrobutyrine. 2,3-didehydroalanine (Ser) is present on residues Ser45 and Ser48. The segment at residues 52-56 is a cross-link (lanthionine (Ser-Cys)); it reads STNTC. Cross-links (beta-methyllanthionine (Thr-Cys)) lie at residues 58 to 61 and 62 to 65; these read TTKC and TRAC.

Post-translationally, maturation of lantibiotics involves the enzymatic conversion of Thr, and Ser into dehydrated AA and the formation of thioether bonds with cysteine. This is followed by membrane translocation and cleavage of the modified precursor. It is not established whether the 2,3-didehydrobutyrines are the E- or Z-isomers. In the NMR model they were assumed to be the Z-isomer.

It localises to the secreted. In terms of biological role, lanthionine-containing peptide antibiotic (lantibiotic) active on Gram-positive bacteria. The bactericidal activity of lantibiotics is based on depolarization of energized bacterial cytoplasmic membranes, initiated by the formation of aqueous transmembrane pores. When present individually lacticin 3147 A2 exhibits weak activity towards L.lactis strain AM2 and L.lactis strain HP, and no activity towards L.lactis strain IFPL359, but when combined with lacticin 3147 A1 it displays strong activity towards all three strains. The chain is Lantibiotic lacticin 3147 A2 from Lactococcus lactis subsp. lactis (Streptococcus lactis).